Consider the following 108-residue polypeptide: UPF0060 membrane protein Sputw3181_1172 (108 aa).

The next 4 membrane-spanning stretches (helical) occupy residues 3 to 23 (VITT…GCYL), 31 to 51 (GASA…AWLL), 63 to 83 (AAYG…VDGI), and 87 to 107 (RWDL…MFAP).

This sequence belongs to the UPF0060 family.

Its subcellular location is the cell inner membrane. The polypeptide is UPF0060 membrane protein Sputw3181_1172 (Shewanella sp. (strain W3-18-1)).